Consider the following 320-residue polypeptide: Glutaminase (320 aa).

Residues serine 70, asparagine 121, glutamate 165, asparagine 172, tyrosine 196, tyrosine 248, and valine 266 each coordinate substrate.

The protein belongs to the glutaminase family. Homotetramer.

It carries out the reaction L-glutamine + H2O = L-glutamate + NH4(+). The chain is Glutaminase from Mycobacterium marinum (strain ATCC BAA-535 / M).